Consider the following 496-residue polypeptide: Lysine--tRNA ligase (496 aa).

2 residues coordinate Mg(2+): E409 and E416.

Belongs to the class-II aminoacyl-tRNA synthetase family. Homodimer. It depends on Mg(2+) as a cofactor.

The protein resides in the cytoplasm. It catalyses the reaction tRNA(Lys) + L-lysine + ATP = L-lysyl-tRNA(Lys) + AMP + diphosphate. This is Lysine--tRNA ligase from Streptococcus sanguinis (strain SK36).